The primary structure comprises 299 residues: Probable alpha-L-glutamate ligase (299 aa).

The ATP-grasp domain maps to 112 to 294 (LQLLTEQGIA…IALQMIVHIE (183 aa)). Residues K148, 185–186 (DF), D194, and 218–220 (RAN) contribute to the ATP site. Positions 255, 267, and 269 each coordinate Mg(2+). Residues D255, E267, and N269 each contribute to the Mn(2+) site.

This sequence belongs to the RimK family. Mg(2+) serves as cofactor. Mn(2+) is required as a cofactor.

This chain is Probable alpha-L-glutamate ligase, found in Histophilus somni (strain 2336) (Haemophilus somnus).